A 693-amino-acid chain; its full sequence is MSDRKYPLERVRNIGIIAHIDAGKTTTTERILYLTKRTHKIGNIDEGTTVMDWMEQEKARGITITSAATSAYWNGHHLNIIDTPGHVDFTAEVERSLRVLDGGVVVFDGVAGVEAQSETVWRQASRYGVPRICFINKMDRTGANYERTLGMIAERLKAKYLPLQIPIGCAETFRGNCDLLDFKCYGMDNSPEEPVETFDLPAAEKERAVKFRNMMIERLAEEDDEVMEAYLAGEELPIEKLKAAIRRVCLANKAIPIFCGTSLRNKGVKRLLDAVCDYLPSPLDIPAMKGTDPKTGESIERHTSDTEPFSALAFKIVSDPFVGRLVYFRIYSGSISAGSGAYNSTRGERERIGRLIRMHANDREEIEYADAGEIVASLGLRNTFTGDTLCDQNAPILLENIKFPEPVINLAIEPKTRSDQDKMTEGLQKLAEEDPTFKVKFDDETGQTVIYGMGELHLDVLVSRLLSEFKVNAGVGKPRVAYREAITAHAKAQGKFVRQSGGRGQYGDVTIEIEPRERGAGYEFVDNVKGGAIPRNFLMAAESGIRDTLETGVYAGYPMVDVKVIATDGSYHDVDSNENAFKMAGSMAIKAAVAKAKPILLEPIMKLEAVTPEEYMGDVIGDLNSRRGQIISVEPSPETTVITGTVPLAESFGYTTDLRSVTKGRATFSMEFESYREMPGELATQVVEAAGKK.

The tr-type G domain maps to 9-283 (ERVRNIGIIA…AVCDYLPSPL (275 aa)). GTP-binding positions include 18 to 25 (AHIDAGKT), 82 to 86 (DTPGH), and 136 to 139 (NKMD).

This sequence belongs to the TRAFAC class translation factor GTPase superfamily. Classic translation factor GTPase family. EF-G/EF-2 subfamily.

The protein resides in the cytoplasm. Catalyzes the GTP-dependent ribosomal translocation step during translation elongation. During this step, the ribosome changes from the pre-translocational (PRE) to the post-translocational (POST) state as the newly formed A-site-bound peptidyl-tRNA and P-site-bound deacylated tRNA move to the P and E sites, respectively. Catalyzes the coordinated movement of the two tRNA molecules, the mRNA and conformational changes in the ribosome. The chain is Elongation factor G from Dehalococcoides mccartyi (strain ATCC BAA-2100 / JCM 16839 / KCTC 5957 / BAV1).